We begin with the raw amino-acid sequence, 95 residues long: Co-chaperonin GroES (95 aa).

The protein belongs to the GroES chaperonin family. As to quaternary structure, heptamer of 7 subunits arranged in a ring. Interacts with the chaperonin GroEL.

It localises to the cytoplasm. Together with the chaperonin GroEL, plays an essential role in assisting protein folding. The GroEL-GroES system forms a nano-cage that allows encapsulation of the non-native substrate proteins and provides a physical environment optimized to promote and accelerate protein folding. GroES binds to the apical surface of the GroEL ring, thereby capping the opening of the GroEL channel. This Nitratidesulfovibrio vulgaris (strain ATCC 29579 / DSM 644 / CCUG 34227 / NCIMB 8303 / VKM B-1760 / Hildenborough) (Desulfovibrio vulgaris) protein is Co-chaperonin GroES.